A 217-amino-acid chain; its full sequence is Coiled-coil domain-containing protein 124-B (217 aa).

Positions Met1–Pro123 are disordered. Composition is skewed to basic and acidic residues over residues Arg18 to His45, Arg52 to Leu74, and Gln98 to Pro123. Residues Asp41–Gly83 are a coiled coil.

It belongs to the CCDC124 family. In terms of assembly, associates with translationally inactive ribosomes in the nonrotated state.

The protein resides in the cytoplasm. It is found in the cytoskeleton. The protein localises to the microtubule organizing center. It localises to the centrosome. Its subcellular location is the midbody. Functionally, ribosome-binding protein involved in ribosome hibernation: associates with translationally inactive ribosomes and stabilizes the nonrotated conformation of the 80S ribosome, thereby promoting ribosome preservation and storage. The sequence is that of Coiled-coil domain-containing protein 124-B (ccdc124-b) from Xenopus laevis (African clawed frog).